The primary structure comprises 83 residues: Ferredoxin (83 aa).

2 4Fe-4S ferredoxin-type domains span residues 2–29 (ALMI…QGDE) and 31–64 (YVIE…KDPS). [4Fe-4S] cluster contacts are provided by cysteine 9, cysteine 12, cysteine 15, cysteine 19, cysteine 38, cysteine 41, cysteine 50, and cysteine 54.

[4Fe-4S] cluster serves as cofactor.

Ferredoxins are iron-sulfur proteins that transfer electrons in a wide variety of metabolic reactions. This Allochromatium vinosum (strain ATCC 17899 / DSM 180 / NBRC 103801 / NCIMB 10441 / D) (Chromatium vinosum) protein is Ferredoxin (fdx).